The primary structure comprises 163 residues: Phosphopantetheine adenylyltransferase (163 aa).

Thr10 contacts substrate. ATP is bound by residues 10–11 and His18; that span reads TF. Substrate is bound by residues Lys42, Leu74, and Arg88. ATP is bound by residues 89–91, Glu99, and 124–130; these read GLR and NSFISST.

It belongs to the bacterial CoaD family. In terms of assembly, homohexamer. Requires Mg(2+) as cofactor.

It localises to the cytoplasm. The catalysed reaction is (R)-4'-phosphopantetheine + ATP + H(+) = 3'-dephospho-CoA + diphosphate. It functions in the pathway cofactor biosynthesis; coenzyme A biosynthesis; CoA from (R)-pantothenate: step 4/5. Functionally, reversibly transfers an adenylyl group from ATP to 4'-phosphopantetheine, yielding dephospho-CoA (dPCoA) and pyrophosphate. The protein is Phosphopantetheine adenylyltransferase of Shewanella putrefaciens (strain CN-32 / ATCC BAA-453).